The chain runs to 556 residues: Dihydroxy-acid dehydratase (556 aa).

D78 is a binding site for Mg(2+). C119 serves as a coordination point for [2Fe-2S] cluster. D120 and K121 together coordinate Mg(2+). K121 bears the N6-carboxylysine mark. Residue C191 participates in [2Fe-2S] cluster binding. Mg(2+) is bound at residue E442. S468 functions as the Proton acceptor in the catalytic mechanism.

Belongs to the IlvD/Edd family. In terms of assembly, homodimer. Requires [2Fe-2S] cluster as cofactor. The cofactor is Mg(2+).

It carries out the reaction (2R)-2,3-dihydroxy-3-methylbutanoate = 3-methyl-2-oxobutanoate + H2O. The enzyme catalyses (2R,3R)-2,3-dihydroxy-3-methylpentanoate = (S)-3-methyl-2-oxopentanoate + H2O. It participates in amino-acid biosynthesis; L-isoleucine biosynthesis; L-isoleucine from 2-oxobutanoate: step 3/4. Its pathway is amino-acid biosynthesis; L-valine biosynthesis; L-valine from pyruvate: step 3/4. In terms of biological role, functions in the biosynthesis of branched-chain amino acids. Catalyzes the dehydration of (2R,3R)-2,3-dihydroxy-3-methylpentanoate (2,3-dihydroxy-3-methylvalerate) into 2-oxo-3-methylpentanoate (2-oxo-3-methylvalerate) and of (2R)-2,3-dihydroxy-3-methylbutanoate (2,3-dihydroxyisovalerate) into 2-oxo-3-methylbutanoate (2-oxoisovalerate), the penultimate precursor to L-isoleucine and L-valine, respectively. The sequence is that of Dihydroxy-acid dehydratase from Clostridium beijerinckii (strain ATCC 51743 / NCIMB 8052) (Clostridium acetobutylicum).